Reading from the N-terminus, the 83-residue chain is UPF0729 protein CBG02799 (83 aa).

Residues 51–83 (QEKKEEEEEKEKSCCSTEAENTTEVTTETKKDQ) are disordered. The segment covering 67–76 (TEAENTTEVT) has biased composition (low complexity).

Belongs to the UPF0729 family.

In Caenorhabditis briggsae, this protein is UPF0729 protein CBG02799.